The following is a 395-amino-acid chain: Phosphopentomutase (395 aa).

The Mn(2+) site is built by Asp13, Asp288, His293, Asp329, His330, and His341.

It belongs to the phosphopentomutase family. The cofactor is Mn(2+).

It is found in the cytoplasm. It catalyses the reaction 2-deoxy-alpha-D-ribose 1-phosphate = 2-deoxy-D-ribose 5-phosphate. The catalysed reaction is alpha-D-ribose 1-phosphate = D-ribose 5-phosphate. It functions in the pathway carbohydrate degradation; 2-deoxy-D-ribose 1-phosphate degradation; D-glyceraldehyde 3-phosphate and acetaldehyde from 2-deoxy-alpha-D-ribose 1-phosphate: step 1/2. In terms of biological role, isomerase that catalyzes the conversion of deoxy-ribose 1-phosphate (dRib-1-P) and ribose 1-phosphate (Rib-1-P) to deoxy-ribose 5-phosphate (dRib-5-P) and ribose 5-phosphate (Rib-5-P), respectively. This is Phosphopentomutase from Agathobacter rectalis (strain ATCC 33656 / DSM 3377 / JCM 17463 / KCTC 5835 / VPI 0990) (Eubacterium rectale).